The chain runs to 328 residues: Malate dehydrogenase (328 aa).

11-17 lines the NAD(+) pocket; sequence GAAGQIG. The substrate site is built by Arg94 and Arg100. Residues Asn107, Gln114, and 131–133 contribute to the NAD(+) site; that span reads VGN. Positions 133 and 164 each coordinate substrate. Catalysis depends on His189, which acts as the Proton acceptor.

This sequence belongs to the LDH/MDH superfamily. MDH type 2 family.

It carries out the reaction (S)-malate + NAD(+) = oxaloacetate + NADH + H(+). Catalyzes the reversible oxidation of malate to oxaloacetate. The sequence is that of Malate dehydrogenase from Xylella fastidiosa (strain M12).